The following is a 136-amino-acid chain: Holo-[acyl-carrier-protein] synthase (136 aa).

Positions 8 and 57 each coordinate Mg(2+).

It belongs to the P-Pant transferase superfamily. AcpS family. Mg(2+) serves as cofactor.

It localises to the cytoplasm. The catalysed reaction is apo-[ACP] + CoA = holo-[ACP] + adenosine 3',5'-bisphosphate + H(+). In terms of biological role, transfers the 4'-phosphopantetheine moiety from coenzyme A to a Ser of acyl-carrier-protein. This Methylorubrum extorquens (strain PA1) (Methylobacterium extorquens) protein is Holo-[acyl-carrier-protein] synthase.